A 316-amino-acid polypeptide reads, in one-letter code: C-type lectin domain family 10 member A (316 aa).

Over 1–39 (MTRTYENFQYLENKVKVQGFKNGPLPLQSLLQRLCSGPC) the chain is Cytoplasmic. Positions 5-8 (YENF) match the Endocytosis signal motif. A helical; Signal-anchor for type II membrane protein membrane pass occupies residues 40–60 (HLLLSLGLGLLLLVIICVVGF). At 61 to 316 (QNSKFQRDLV…GLGQTSQESH (256 aa)) the chain is on the extracellular side. Residues Asn78 and Asn173 are each glycosylated (N-linked (GlcNAc...) asparagine). A coiled-coil region spans residues 85–176 (AEIQALTSQG…VATLNNNAST (92 aa)). 3 disulfides stabilise this stretch: Cys181/Cys192, Cys209/Cys304, and Cys282/Cys296. One can recognise a C-type lectin domain in the interval 188 to 305 (HQDSCYWFSH…CQRPYHWVCE (118 aa)). 4 residues coordinate Ca(2+): Val218, Asn220, Glu224, and Asp243. A glycoprotein is bound by residues Gln267 and Asp269. Positions 269, 270, 280, and 281 each coordinate Ca(2+). Residue Glu280 coordinates a glycoprotein. The a glycoprotein site is built by His286 and Asn292. Ca(2+)-binding residues include Asn292, Asp293, and Glu305.

As to quaternary structure, interacts with A-, B- and C-domain containing PTPRC/CD45 isoforms: isoform 1/CD45ABC, isoform 3/CD45AB, isoform 5/CD45BC and isoform 7/CD45B. Does not interact with PTPRC/CD45 isoform 2/CD45RO, a memory T cell marker. As to expression, expressed in myeloid antigen presenting cells in lymph nodes and skin (at protein level). Expressed in dermal dendritic cells (at protein level).

The protein localises to the cell membrane. Its subcellular location is the early endosome membrane. The protein resides in the lysosome membrane. Its function is as follows. C-type lectin receptor involved in recognition of N-acetylgalactosamine (GalNAc)-terminated glycans by myeloid antigen presenting cells (APCs). Binds in a Ca(2+)-dependent manner to alpha- and beta-linked GalNAc residues on glycoprotein and glycolipid antigens, including alphaGalNAc- and Galbeta1-&gt;3GalNAc-O-Ser/Thr also known as Tn and T antigens, LacdiNAc epitope GalNAcbeta1-&gt;4GlcNAc and its derivative GalNAcbeta1-&gt;4-(Fucalpha1-&gt;3)GlcNAc, O-linked core 5 and 6 glycans, and GM2 and GD2 gangliosides. Acts as a signaling receptor at the interface of APC-T cell interactions. On immature dendritic cells, recognizes Tn antigen-carrying PTPRC/CD45 receptor on effector T cells and downregulates PTRPN/CD45 phosphatase activity with an impact on T cell activation threshold, cytokine production and proliferation. Modulates dendritic cell maturation toward a tolerogenic phenotype leading to generation of regulatory CD4-positive T cell subset with immune suppressive functions. Acts as an endocytic pattern recognition receptor involved in antitumor immunity. During tumorigenesis, recognizes Tn antigens and its sialylated forms Neu5Ac-Tn and Neu5Gc-Tn expressed on tumor cell mucins. On immature dendritic cells, can internalize Tn-terminated immunogens and target them to endolysosomal compartment for MHC class I and II antigen presentation to CD8-positive and CD4-positive T cells, respectively. The polypeptide is C-type lectin domain family 10 member A (Homo sapiens (Human)).